Reading from the N-terminus, the 3354-residue chain is Cadherin-23 (3354 aa).

The signal sequence occupies residues 1-23; that stretch reads MRYSLVTCYAVLWLLMLVPGSWG. Over 24–3064 the chain is Extracellular; it reads QVNRLPFFTN…SVQLPDDMSA (3041 aa). 27 consecutive Cadherin domains span residues 34 to 132, 133 to 236, 237 to 348, 349 to 460, 461 to 561, 562 to 671, 672 to 784, 779 to 890, 891 to 995, 996 to 1102, 1103 to 1208, 1210 to 1313, 1314 to 1418, 1420 to 1527, 1529 to 1634, 1635 to 1744, 1745 to 1851, 1852 to 1959, 1960 to 2069, 2070 to 2174, 2175 to 2293, 2297 to 2402, 2403 to 2509, 2510 to 2611, 2614 to 2722, 2729 to 2846, and 2847 to 2975; these read HFFD…APTF, HNQP…DPIF, INLP…APEF, NSSE…RPIF, SQPL…VPTF, QKDA…PPTF, SKPA…APYY, KDAP…DPTF, RNLP…TPTF, FPAV…RPIF, LQSS…APVF, QQQY…AVQF, SNAS…SPRF, FTSD…PPVI, SPFG…APVF, QQPH…VPTF, PRDY…DPVL, LNLP…HPLF, TEGT…WPTF, SPPT…RPEF, LNPI…TPQF, GITY…NPIF, DQPS…RPQF, SKPQ…RPVF, PPNG…EPLF, SPQY…PPRF, and TKAE…EEEF. N155 and N206 each carry an N-linked (GlcNAc...) asparagine glycan. N349, N393, N434, N466, N472, N602, N694, N765, N810, N827, N941, N1001, N1018, N1171, N1282, N1315, N1473, N1534, N1651, N1667, N1818, N1857, N1889, N1902, N2014, N2050, N2129, N2168, N2195, N2263, N2357, and N2369 each carry an N-linked (GlcNAc...) asparagine glycan. Residues N2578, N2616, N2749, N2808, N2877, N2896, N2941, and N2981 are each glycosylated (N-linked (GlcNAc...) asparagine). A helical membrane pass occupies residues 3065-3085; sequence LQMAIIVLAILLFLAAMLFVL. Residues 3086–3354 lie on the Cytoplasmic side of the membrane; that stretch reads MNWYYRTIHK…MESPLEITEL (269 aa).

As to quaternary structure, interacts with USH1C and USH1G. antiparallel heterodimer with PCDH15. Isoform C1: Interacts with CAMSAP3; leading to inhibit CAMSAP3 ability to induce microtubule bundle formation. In adult animals relatively high levels of expression are found in testis, skeletal muscle, heart, eye and thymus, and lower expression in kidney, lung and brain. Found in the sensory hair cells of the inner ear.

The protein localises to the cell membrane. Cadherins are calcium-dependent cell adhesion proteins. They preferentially interact with themselves in a homophilic manner in connecting cells. CDH23 is required for establishing and/or maintaining the proper organization of the stereocilia bundle of hair cells in the cochlea and the vestibule during late embryonic/early postnatal development. It is part of the functional network formed by USH1C, USH1G, CDH23 and MYO7A that mediates mechanotransduction in cochlear hair cells. Required for normal hearing. The sequence is that of Cadherin-23 (Cdh23) from Mus musculus (Mouse).